We begin with the raw amino-acid sequence, 220 residues long: Deoxyribose-phosphate aldolase 1 (220 aa).

D89 acts as the Proton donor/acceptor in catalysis. The active-site Schiff-base intermediate with acetaldehyde is K151. The active-site Proton donor/acceptor is the K180.

This sequence belongs to the DeoC/FbaB aldolase family. DeoC type 1 subfamily.

The protein localises to the cytoplasm. The catalysed reaction is 2-deoxy-D-ribose 5-phosphate = D-glyceraldehyde 3-phosphate + acetaldehyde. Its pathway is carbohydrate degradation; 2-deoxy-D-ribose 1-phosphate degradation; D-glyceraldehyde 3-phosphate and acetaldehyde from 2-deoxy-alpha-D-ribose 1-phosphate: step 2/2. Functionally, catalyzes a reversible aldol reaction between acetaldehyde and D-glyceraldehyde 3-phosphate to generate 2-deoxy-D-ribose 5-phosphate. This Staphylococcus aureus (strain bovine RF122 / ET3-1) protein is Deoxyribose-phosphate aldolase 1.